A 555-amino-acid polypeptide reads, in one-letter code: GPI-anchor transamidase component PIGS (555 aa).

At 2-18 (AAAGAAATDLEVVRGKR) the chain is on the cytoplasmic side. The a cardiolipin site is built by Arg15 and Arg18. A helical membrane pass occupies residues 19–39 (SALFFAAVAILLGLPLWWKTT). Topologically, residues 40–517 (ETYRAPLPYS…LHLLYFPDDQ (478 aa)) are lumenal. N-linked (GlcNAc...) asparagine glycans are attached at residues Asn267 and Asn370. Residues 518-532 (KFAIYIPLFLPMAVP) traverse the membrane as a helical segment. Over 533 to 555 (ILLSLVKIFQETRKSWKKPEKID) the chain is Cytoplasmic.

This sequence belongs to the PIGS family. Heteropentamer. Part of the GPI-anchor transamidase complex, consisting of PIGK, PIGT, PIGS, PIGU and GAA1.

Its subcellular location is the endoplasmic reticulum membrane. The protein operates within glycolipid biosynthesis; glycosylphosphatidylinositol-anchor biosynthesis. Its function is as follows. Component of the glycosylphosphatidylinositol-anchor (GPI-anchor) transamidase (GPI-T) complex that catalyzes the formation of the linkage between a proprotein and a GPI-anchor and participates in GPI anchored protein biosynthesis. This Mus musculus (Mouse) protein is GPI-anchor transamidase component PIGS.